A 572-amino-acid polypeptide reads, in one-letter code: Methionine--tRNA ligase (572 aa).

A 'HIGH' region motif is present at residues 11–21 (PYINGVKHLGN). 4 residues coordinate Zn(2+): cysteine 143, cysteine 146, cysteine 156, and cysteine 159. Positions 341 to 345 (KFSTS) match the 'KMSKS' region motif. Residue threonine 344 coordinates ATP.

The protein belongs to the class-I aminoacyl-tRNA synthetase family. MetG type 1 subfamily. Monomer. It depends on Zn(2+) as a cofactor.

It is found in the cytoplasm. It carries out the reaction tRNA(Met) + L-methionine + ATP = L-methionyl-tRNA(Met) + AMP + diphosphate. Functionally, is required not only for elongation of protein synthesis but also for the initiation of all mRNA translation through initiator tRNA(fMet) aminoacylation. The chain is Methionine--tRNA ligase from Maricaulis maris (strain MCS10) (Caulobacter maris).